We begin with the raw amino-acid sequence, 230 residues long: 5'-methylthioadenosine/S-adenosylhomocysteine nucleosidase (230 aa).

The active-site Proton acceptor is the E12. Substrate is bound by residues G78, I153, and 174–175 (ME). D198 (proton donor) is an active-site residue.

It belongs to the PNP/UDP phosphorylase family. MtnN subfamily.

The enzyme catalyses S-adenosyl-L-homocysteine + H2O = S-(5-deoxy-D-ribos-5-yl)-L-homocysteine + adenine. The catalysed reaction is S-methyl-5'-thioadenosine + H2O = 5-(methylsulfanyl)-D-ribose + adenine. It catalyses the reaction 5'-deoxyadenosine + H2O = 5-deoxy-D-ribose + adenine. It participates in amino-acid biosynthesis; L-methionine biosynthesis via salvage pathway; S-methyl-5-thio-alpha-D-ribose 1-phosphate from S-methyl-5'-thioadenosine (hydrolase route): step 1/2. In terms of biological role, catalyzes the irreversible cleavage of the glycosidic bond in both 5'-methylthioadenosine (MTA) and S-adenosylhomocysteine (SAH/AdoHcy) to adenine and the corresponding thioribose, 5'-methylthioribose and S-ribosylhomocysteine, respectively. Also cleaves 5'-deoxyadenosine, a toxic by-product of radical S-adenosylmethionine (SAM) enzymes, into 5-deoxyribose and adenine. In Shewanella halifaxensis (strain HAW-EB4), this protein is 5'-methylthioadenosine/S-adenosylhomocysteine nucleosidase.